A 469-amino-acid chain; its full sequence is Argininosuccinate lyase (469 aa).

This sequence belongs to the lyase 1 family. Argininosuccinate lyase subfamily.

The protein resides in the cytoplasm. The catalysed reaction is 2-(N(omega)-L-arginino)succinate = fumarate + L-arginine. The protein operates within amino-acid biosynthesis; L-arginine biosynthesis; L-arginine from L-ornithine and carbamoyl phosphate: step 3/3. This chain is Argininosuccinate lyase, found in Cupriavidus metallidurans (strain ATCC 43123 / DSM 2839 / NBRC 102507 / CH34) (Ralstonia metallidurans).